Reading from the N-terminus, the 138-residue chain is Putative nickel-responsive regulator (138 aa).

His80, His91, His93, and Cys99 together coordinate Ni(2+).

The protein belongs to the transcriptional regulatory CopG/NikR family. Ni(2+) serves as cofactor.

In terms of biological role, transcriptional regulator. In Campylobacter hominis (strain ATCC BAA-381 / DSM 21671 / CCUG 45161 / LMG 19568 / NCTC 13146 / CH001A), this protein is Putative nickel-responsive regulator.